The sequence spans 205 residues: ATP-dependent Clp protease proteolytic subunit (205 aa).

The active-site Nucleophile is S98. H123 is a catalytic residue.

This sequence belongs to the peptidase S14 family. In terms of assembly, fourteen ClpP subunits assemble into 2 heptameric rings which stack back to back to give a disk-like structure with a central cavity, resembling the structure of eukaryotic proteasomes.

The protein localises to the cytoplasm. It carries out the reaction Hydrolysis of proteins to small peptides in the presence of ATP and magnesium. alpha-casein is the usual test substrate. In the absence of ATP, only oligopeptides shorter than five residues are hydrolyzed (such as succinyl-Leu-Tyr-|-NHMec, and Leu-Tyr-Leu-|-Tyr-Trp, in which cleavage of the -Tyr-|-Leu- and -Tyr-|-Trp bonds also occurs).. In terms of biological role, cleaves peptides in various proteins in a process that requires ATP hydrolysis. Has a chymotrypsin-like activity. Plays a major role in the degradation of misfolded proteins. The sequence is that of ATP-dependent Clp protease proteolytic subunit from Desulforapulum autotrophicum (strain ATCC 43914 / DSM 3382 / VKM B-1955 / HRM2) (Desulfobacterium autotrophicum).